The following is a 643-amino-acid chain: Threonine--tRNA ligase (643 aa).

One can recognise a TGS domain in the interval Met1–Thr61. A catalytic region spans residues Asp243 to Pro534. Positions 334, 385, and 511 each coordinate Zn(2+).

The protein belongs to the class-II aminoacyl-tRNA synthetase family. In terms of assembly, homodimer. The cofactor is Zn(2+).

Its subcellular location is the cytoplasm. It catalyses the reaction tRNA(Thr) + L-threonine + ATP = L-threonyl-tRNA(Thr) + AMP + diphosphate + H(+). Its function is as follows. Catalyzes the attachment of threonine to tRNA(Thr) in a two-step reaction: L-threonine is first activated by ATP to form Thr-AMP and then transferred to the acceptor end of tRNA(Thr). Also edits incorrectly charged L-seryl-tRNA(Thr). This chain is Threonine--tRNA ligase, found in Actinobacillus pleuropneumoniae serotype 7 (strain AP76).